The following is a 506-amino-acid chain: Zinc finger and SCAN domain containing protein 4D (506 aa).

The region spanning S37–C119 is the SCAN box domain. The disordered stretch occupies residues S238–K264. 4 consecutive C2H2-type zinc fingers follow at residues F395–H417, L424–H446, F452–H474, and Y480–H503.

In terms of tissue distribution, highly expressed at the 2-cell stage but its expression is rapidly turned off.

Its subcellular location is the nucleus. The protein localises to the chromosome. It localises to the telomere. Functionally, transcription factor required to regulate early development. Binds telomeres and plays a key role in genomic stability by regulating telomere elongation. Acts as an activator of spontaneous telomere sister chromatid exchange (T-SCE) and telomere elongation. This chain is Zinc finger and SCAN domain containing protein 4D (Zscan4d), found in Mus musculus (Mouse).